A 284-amino-acid polypeptide reads, in one-letter code: Pantothenate synthetase (284 aa).

ATP is bound at residue 30-37; sequence MGNLHDGH. The Proton donor role is filled by histidine 37. Residue glutamine 61 participates in (R)-pantoate binding. Residue glutamine 61 participates in beta-alanine binding. Position 149–152 (149–152) interacts with ATP; sequence GEKD. Residue glutamine 155 participates in (R)-pantoate binding. Residues isoleucine 178 and 186–189 each bind ATP; that span reads LSSR.

This sequence belongs to the pantothenate synthetase family. As to quaternary structure, homodimer.

The protein localises to the cytoplasm. The enzyme catalyses (R)-pantoate + beta-alanine + ATP = (R)-pantothenate + AMP + diphosphate + H(+). It functions in the pathway cofactor biosynthesis; (R)-pantothenate biosynthesis; (R)-pantothenate from (R)-pantoate and beta-alanine: step 1/1. Its function is as follows. Catalyzes the condensation of pantoate with beta-alanine in an ATP-dependent reaction via a pantoyl-adenylate intermediate. The chain is Pantothenate synthetase from Salmonella heidelberg (strain SL476).